Here is a 259-residue protein sequence, read N- to C-terminus: TCF3 fusion partner homolog (259 aa).

Disordered regions lie at residues 50–72 (GGLG…GRRR) and 141–210 (EDDG…APVQ). Residue serine 167 is modified to Phosphoserine. Over residues 167–178 (SPSQRTTATLDP) the composition is skewed to polar residues. At threonine 172 the chain carries Phosphothreonine. 2 positions are modified to phosphoserine: serine 180 and serine 188. Threonine 203 is modified (phosphothreonine). Lysine 222 is covalently cross-linked (Glycyl lysine isopeptide (Lys-Gly) (interchain with G-Cter in SUMO2)). A Phosphoserine modification is found at serine 255.

In terms of assembly, interacts with NOL3; translocates NOL3 into the nucleus and negatively regulated TFPT-induced cell death. Component of the chromatin remodeling INO80 complex; specifically part of a complex module associated with the N-terminus of INO80.

It localises to the nucleus. In terms of biological role, appears to promote apoptosis in a p53/TP53-independent manner. Functionally, putative regulatory component of the chromatin remodeling INO80 complex which is involved in transcriptional regulation, DNA replication and probably DNA repair. This is TCF3 fusion partner homolog (Tfpt) from Mus musculus (Mouse).